The chain runs to 508 residues: Zinc finger CCCH-type with G patch domain-containing protein (508 aa).

A C3H1-type zinc finger spans residues 154-177 (PCNYYLEGECRFDETRCRYSHGAL). The interval 253–279 (DDELSSDSEETNETDGSDAANESDMDD) is disordered. Positions 309-355 (TRGIGSKLMASMGYIHGTGLGSDGRGIVTPVSAQILPQGRSLDACME) constitute a G-patch domain. A compositionally biased stretch (polar residues) spans 486 to 495 (QAQESSLSKE). A disordered region spans residues 486-508 (QAQESSLSKEQQTRKSKNKMFEF). A compositionally biased stretch (basic residues) spans 499–508 (RKSKNKMFEF).

It is found in the nucleus. Functionally, transcription repressor. In Drosophila virilis (Fruit fly), this protein is Zinc finger CCCH-type with G patch domain-containing protein.